Here is a 169-residue protein sequence, read N- to C-terminus: Holo-[acyl-carrier-protein] synthase (169 aa).

Positions 8 and 50 each coordinate Mg(2+).

This sequence belongs to the P-Pant transferase superfamily. AcpS family. Requires Mg(2+) as cofactor.

It localises to the cytoplasm. It catalyses the reaction apo-[ACP] + CoA = holo-[ACP] + adenosine 3',5'-bisphosphate + H(+). In terms of biological role, transfers the 4'-phosphopantetheine moiety from coenzyme A to a Ser of acyl-carrier-protein. This Thermotoga maritima (strain ATCC 43589 / DSM 3109 / JCM 10099 / NBRC 100826 / MSB8) protein is Holo-[acyl-carrier-protein] synthase.